The sequence spans 241 residues: MSRVALVTGGSRGIGAAISIALKAAGYKVAASYAGNDDAAKPFKAETGIAVYKWDVSSYEACVEGIAKVEADLGPIDVLVNNAGITKDAMFHKMTPDQWNAVINTNLTGLFNMTHPVWSGMRDRSFGRIVNISSINGQKGQMGQANYSAAKAGDLGFTKALAQEGAAKGITVNAICPGYIGTEMVRAIPEKVLNERIIPQIPVGRLGEPDEIARIVVFLASDEAGFITGSTISANGGQFFV.

Residues R12–I14 and N82–T86 contribute to the NADP(+) site. Substrate is bound by residues D88 and Q141–Q144. The active-site Proton acceptor is the Y147. P177–I180 provides a ligand contact to NADP(+). Position 178–179 (G178–Y179) interacts with substrate.

It belongs to the short-chain dehydrogenases/reductases (SDR) family.

Its subcellular location is the cytoplasm. The enzyme catalyses a (3R)-3-hydroxyacyl-CoA + NADP(+) = a 3-oxoacyl-CoA + NADPH + H(+). It functions in the pathway biopolymer metabolism; poly-(R)-3-hydroxybutanoate biosynthesis. The polypeptide is Acetoacetyl-CoA reductase (Shinella zoogloeoides (Crabtreella saccharophila)).